Here is a 143-residue protein sequence, read N- to C-terminus: FAD synthase (143 aa).

ATP-binding positions include 11-12 (TF), 16-19 (HPGH), and Asp-94.

This sequence belongs to the archaeal FAD synthase family. In terms of assembly, homodimer. Requires a divalent metal cation as cofactor.

It carries out the reaction FMN + ATP + H(+) = FAD + diphosphate. The protein operates within cofactor biosynthesis; FAD biosynthesis; FAD from FMN: step 1/1. Its function is as follows. Catalyzes the transfer of the AMP portion of ATP to flavin mononucleotide (FMN) to produce flavin adenine dinucleotide (FAD) coenzyme. This Halomicrobium mukohataei (strain ATCC 700874 / DSM 12286 / JCM 9738 / NCIMB 13541) (Haloarcula mukohataei) protein is FAD synthase.